Consider the following 209-residue polypeptide: Chromophore lyase CpcT/CpeT 1 (209 aa).

This sequence belongs to the CpcT/CpeT biliprotein lyase family.

Its function is as follows. Covalently attaches a chromophore to Cys residue(s) of phycobiliproteins. In Trichodesmium erythraeum (strain IMS101), this protein is Chromophore lyase CpcT/CpeT 1.